Here is a 638-residue protein sequence, read N- to C-terminus: Bifunctional protein glk (638 aa).

The interval 1–20 is disordered; sequence MSTGVQTKAAPGAGQHADGP. Residues 1–341 form a glucokinase region; sequence MSTGVQTKAA…QLSNRAGGSS (341 aa). ATP is bound at residue 24–29; it reads ADIGGT. One can recognise an HTH rpiR-type domain in the interval 342-418; that stretch reads SAVFERIRQM…LKLATGLTGT (77 aa). The segment at 342-638 is putative HTH-type transcriptional regulator; it reads SAVFERIRQM…SHGAASSARD (297 aa). Residues 378 to 397 constitute a DNA-binding region (H-T-H motif); that stretch reads IVDIARKADVSQPTVIRFCR. Residues 462 to 601 enclose the SIS domain; that stretch reads AIDLLNGARR…AVGVAIRRAV (140 aa).

The protein in the N-terminal section; belongs to the bacterial glucokinase family.

Its subcellular location is the cytoplasm. It catalyses the reaction D-glucose + ATP = D-glucose 6-phosphate + ADP + H(+). The protein is Bifunctional protein glk (glk) of Paraburkholderia xenovorans (strain LB400).